Reading from the N-terminus, the 368-residue chain is Glycolate oxidase 3 (368 aa).

Met1 is subject to N-acetylmethionine. The FMN hydroxy acid dehydrogenase domain maps to 1–359 (MEITNVMEYE…SRTHIKTDWD (359 aa)). Residue Tyr24 participates in glyoxylate binding. Residues 77-79 (PTA), Ser106, 127-129 (QLY), and Thr155 contribute to the FMN site. Glyoxylate is bound at residue Tyr129. Residue Arg164 participates in glyoxylate binding. FMN-binding residues include Lys230 and Ser252. Glyoxylate contacts are provided by His254 and Arg257. His254 serves as the catalytic Proton acceptor. FMN contacts are provided by residues 285–289 (DGGVR) and 308–309 (GR).

The protein belongs to the FMN-dependent alpha-hydroxy acid dehydrogenase family. In terms of assembly, homotetramer. The cofactor is FMN.

It localises to the peroxisome. It catalyses the reaction glycolate + O2 = glyoxylate + H2O2. Its pathway is photosynthesis; photorespiration; glycine from 2-phosphoglycolate: step 2/3. Catalyzes the oxidation of glycolate to glyoxylate, with a reduction of O2 to H2O2. Is a key enzyme in photorespiration in green plants. The sequence is that of Glycolate oxidase 3 (GLO5) from Arabidopsis thaliana (Mouse-ear cress).